The chain runs to 206 residues: Small ribosomal subunit protein uS4 (206 aa).

One can recognise an S4 RNA-binding domain in the interval 96-158 (GRLDNVVYRM…AKQQTRIKAA (63 aa)).

This sequence belongs to the universal ribosomal protein uS4 family. As to quaternary structure, part of the 30S ribosomal subunit. Contacts protein S5. The interaction surface between S4 and S5 is involved in control of translational fidelity.

One of the primary rRNA binding proteins, it binds directly to 16S rRNA where it nucleates assembly of the body of the 30S subunit. Functionally, with S5 and S12 plays an important role in translational accuracy. The chain is Small ribosomal subunit protein uS4 from Vibrio vulnificus (strain CMCP6).